The sequence spans 129 residues: MTGGKGKSGVAAVAQGASNSRSSKAGLTFPVGRVHRFLRNGNYAQRIGSSAPVYLASVLEYLTAEILELAGNAARDNKKSRIIPRHLQLAIRNDEELNKLLGQVTIAQGGVMPYIHQNLLPKKSGKAAV.

Lys-5 bears the N6-acetyllysine mark. N5-methylglutamine is present on Gln-108.

It belongs to the histone H2A family. The nucleosome is a histone octamer containing two molecules each of H2A, H2B, H3 and H4 assembled in one H3-H4 heterotetramer and two H2A-H2B heterodimers. The octamer wraps approximately 147 bp of DNA. Post-translationally, acetylated by ESA1 to form H2AK4ac.

The protein localises to the nucleus. It is found in the chromosome. Functionally, core component of nucleosome which plays a central role in DNA double strand break (DSB) repair. Nucleosomes wrap and compact DNA into chromatin, limiting DNA accessibility to the cellular machineries which require DNA as a template. Histones thereby play a central role in transcription regulation, DNA repair, DNA replication and chromosomal stability. DNA accessibility is regulated via a complex set of post-translational modifications of histones, also called histone code, and nucleosome remodeling. This is Histone H2A.2 (HTA2) from Lodderomyces elongisporus (strain ATCC 11503 / CBS 2605 / JCM 1781 / NBRC 1676 / NRRL YB-4239) (Yeast).